The sequence spans 374 residues: MTMAANLARRLIGNRSTQILGAVNSSSGAASSVARAFCSSTTPITATLFPGDGIGPEIAESVKKVFTTAGVPIEWEEHYVGTEIDPRTQSFLTWESLESVRRNKVGLKGPMATPIGKGHRSLNLTLRKELNLYANVRPCYSLPGYKTRYDDVDLITIRENTEGEYSGLEHQVVRGVVESLKIITRQASLRVAEYAFLYAKTHGRERVSAIHKANIMQKTDGLFLKCCREVAEKYPEITYEEVVIDNCCMMLVKNPALFDVLVMPNLYGDIISDLCAGLVGGLGLTPSCNIGEDGVALAEAVHGSAPDIAGKNLANPTALLLSGVMMLRHLKFNEQAEQIHSAIINTIAEGKYRTADLGGSSTTTEFTKAICDHL.

Residues 1 to 44 constitute a mitochondrion transit peptide; sequence MTMAANLARRLIGNRSTQILGAVNSSSGAASSVARAFCSSTTPI. Residues arginine 127, arginine 137, arginine 158, and aspartate 245 each coordinate substrate. 3 residues coordinate Mg(2+): aspartate 245, aspartate 269, and aspartate 273.

It belongs to the isocitrate and isopropylmalate dehydrogenases family. Heterooligomer of catalytic and regulatory subunits. It depends on Mg(2+) as a cofactor. The cofactor is Mn(2+). Ubiquitous.

It is found in the mitochondrion. It carries out the reaction D-threo-isocitrate + NAD(+) = 2-oxoglutarate + CO2 + NADH. In terms of biological role, performs an essential role in the oxidative function of the citric acid cycle. This Arabidopsis thaliana (Mouse-ear cress) protein is Isocitrate dehydrogenase [NAD] catalytic subunit 5, mitochondrial (IDH5).